Here is a 335-residue protein sequence, read N- to C-terminus: Methionine import ATP-binding protein MetN 2 (335 aa).

Residues 2–242 form the ABC transporter domain; it reads IEFHDVHKTY…PQHPTTRRFV (241 aa). Position 38–45 (38–45) interacts with ATP; sequence GHSGAGKS.

This sequence belongs to the ABC transporter superfamily. Methionine importer (TC 3.A.1.24) family. In terms of assembly, the complex is composed of two ATP-binding proteins (MetN), two transmembrane proteins (MetI) and a solute-binding protein (MetQ).

The protein resides in the cell inner membrane. It catalyses the reaction L-methionine(out) + ATP + H2O = L-methionine(in) + ADP + phosphate + H(+). The catalysed reaction is D-methionine(out) + ATP + H2O = D-methionine(in) + ADP + phosphate + H(+). Part of the ABC transporter complex MetNIQ involved in methionine import. Responsible for energy coupling to the transport system. This Pseudomonas aeruginosa (strain UCBPP-PA14) protein is Methionine import ATP-binding protein MetN 2.